The primary structure comprises 461 residues: Glycolipid 2-alpha-mannosyltransferase 2 (461 aa).

Over 1 to 12 the chain is Cytoplasmic; sequence MKPSIFYSSRQP. A helical; Signal-anchor for type II membrane protein membrane pass occupies residues 13–35; that stretch reads YLKYLAIILTTITIYVLTHSSYS. Residues 35 to 52 show a composition bias toward polar residues; it reads SADPNINDVTTKPISETV. A disordered region spans residues 35–138; that stretch reads SADPNINDVT…SSSKDPVKPE (104 aa). At 36–461 the chain is on the lumenal side; it reads ADPNINDVTT…QKPKEWEKYQ (426 aa). Composition is skewed to low complexity over residues 61–70 and 106–116; these read SSPEQQQQQP and PKSSSSSPQQQ. The segment covering 117–126 has biased composition (basic and acidic residues); the sequence is EKQDTKKESE. Glutamate 349 acts as the Nucleophile in catalysis.

The protein belongs to the glycosyltransferase 15 family.

It is found in the golgi apparatus membrane. Involved in O-glycosylation of cell wall and secreted proteins. Transfers an alpha-D-mannosyl residue from GDP-mannose into lipid-linked oligosaccharide, forming an alpha-(1-&gt;2)-D-mannosyl-D-mannose linkage. Mainly responsible for the addition of the third mannose residue in an O-linked mannose pentamer. Can also substitute for MNT1 by adding the second mannose residue. Important for adherence to host surfaces and for virulence. This chain is Glycolipid 2-alpha-mannosyltransferase 2 (MNT2), found in Candida albicans (strain SC5314 / ATCC MYA-2876) (Yeast).